The chain runs to 493 residues: Cytochrome P450 monooxygenase astA (493 aa).

A helical membrane pass occupies residues 5–25 (EIILLGLAALAVTYQVIVWIY). 2 N-linked (GlcNAc...) asparagine glycosylation sites follow: Asn174 and Asn286. Cys433 lines the heme pocket.

Belongs to the cytochrome P450 family. Heme serves as cofactor.

The protein resides in the membrane. It catalyses the reaction asperterpenoid A + reduced [NADPH--hemoprotein reductase] + O2 = asperterpenoid C + oxidized [NADPH--hemoprotein reductase] + H2O + H(+). It functions in the pathway secondary metabolite biosynthesis; terpenoid biosynthesis. Cytochrome P450 monooxygenase; part of the gene cluster that mediates the biosynthesis of the asperterpenoids, sesterterpenes that exhibit anti-tuberculosis activity. The first step of the pathway is performed by the sesterterpene synthase astC that possesses both prenyl transferase and terpene cyclase activity, converting isopentenyl diphosphate and dimethylallyl diphosphate into geranylfarnesyl diphosphate (GFPP) and further converting GFPP into preasperterpenoid A, respectively. The cytochrome P450 monooxygenase astB then dually oxidizes preasperterpenoid A to produce asperterpenoid A along with a minor product, asperterpenoid B. Finally, the cytochrome P450 monooxygenase astA converts asperterpenoid A into asperterpenoid C. This Talaromyces wortmannii (Penicillium wortmannii) protein is Cytochrome P450 monooxygenase astA.